The primary structure comprises 181 residues: uncharacterized protein (181 aa).

An N-terminal signal peptide occupies residues 1-19 (MRRLLACSAGVLCFSQLGA).

This is an uncharacterized protein from Treponema pallidum (strain Nichols).